We begin with the raw amino-acid sequence, 1325 residues long: uncharacterized protein (1325 aa).

The first 27 residues, 1–27 (MHTFTRKVKWPFMFTAIGLTFGIVAVA), serve as a signal peptide directing secretion. A lipid anchor (N-palmitoyl cysteine) is attached at cysteine 28. Cysteine 28 is lipidated: S-diacylglycerol cysteine. Disordered regions lie at residues 379–402 (RAAS…GTTQ) and 430–464 (NTNA…TGNS). Over residues 436–448 (TGGGGSGGGGGTS) the composition is skewed to gly residues. The span at 449 to 464 (TGSSTGSSTETTTGNS) shows a compositional bias: low complexity.

This sequence belongs to the MG307/MG309/MG338 family.

It is found in the cell membrane. This is an uncharacterized protein from Mycoplasma pneumoniae (strain ATCC 29342 / M129 / Subtype 1) (Mycoplasmoides pneumoniae).